Consider the following 212-residue polypeptide: MKKVLITGFEPFGGDAINPALEAVKRLEETSLDGGIIVTCQVPVTRFESISAVIDAIEAYQPDCVITVGQAAGRAAITPERVAINVDDFRIPDNGGNQPIDEPIIEQGPDAYFSSLPIKRIAQTLHESGIPCQVSNSAGTFVCNHLFYGVQHYLRDKSIRHGFVHIPLLPEQATDGNHPSMSLDMIVAGLKLVAQVVIDHESDVVVSGGQIC.

Residues E80, C143, and H165 contribute to the active site.

This sequence belongs to the peptidase C15 family. As to quaternary structure, homotetramer.

It is found in the cytoplasm. It catalyses the reaction Release of an N-terminal pyroglutamyl group from a polypeptide, the second amino acid generally not being Pro.. Its function is as follows. Removes 5-oxoproline from various penultimate amino acid residues except L-proline. The protein is Pyrrolidone-carboxylate peptidase of Vibrio parahaemolyticus serotype O3:K6 (strain RIMD 2210633).